Consider the following 655-residue polypeptide: MATPSPTKTTWKLQEIVAHGSSVSSVVLGKSSGRLVATGGDDCRVNLWSVNKPNCIMSLTGHTTPVESVRFNNAEELIVAGSQSGSLRVWDLEAAKILRTLMGHKANVCSLDFHPYGDFVASGSLDTNIKLWDVRRKGCVFRYKGHTQAVRCLRFSPDGKWLASASDDHSVKLWDLTAGKMMAELSEHKGPVNIIEFHPNEYLLASGSADRTVRFWDLEKFQLIGCTEGETIPVRAILFSSDGGCIFCGGRDALRVYGWEPDQCFDTVPVGWGKVCDLAICNKQLIGVSSAQSTISSFVVDLTRVKMTGCAPQGPVPAEMPISQPAPAGTSLRRIYERPSTTCSKPKRVSPTSDDEEKESRAEIQNPEDYKEIFQPKNAISRTPPRNSEPFPAPPEDDTSILKEPVAPIPDVVTPATSNKNNTEQLQRPPVAASTPIVCQEPSPVPAPQSKPPVISAARNEPIGLKAADFLPAVKTSSPTEVVDDEAVSQIRKGHDTMCMVLTSRMRNLDTVRAVWSSGDIKTSIDSAVAINDLSVVVDLLNIINQKASLWKLDLCLTVLPQIEKMLQSKYESYVQTGCISLKLILQRFLPLITDILAAPPSVGVDISREERLSKCKLCYKQLRILSPLVKSKASQSGRYGSAFRELHLLMSGLE.

6 WD repeats span residues 18–58 (AHGS…CIMS), 61–100 (GHTTPVESVRFNNAEELIVAGSQSGSLRVWDLEAAKILRT), 103–142 (GHKANVCSLDFHPYGDFVASGSLDTNIKLWDVRRKGCVFR), 145–184 (GHTQAVRCLRFSPDGKWLASASDDHSVKLWDLTAGKMMAE), 187–226 (EHKGPVNIIEFHPNEYLLASGSADRTVRFWDLEKFQLIGC), and 229–269 (GETI…DTVP). Residues 316–453 (VPAEMPISQP…PVPAPQSKPP (138 aa)) are disordered. Residues 358 to 374 (KESRAEIQNPEDYKEIF) show a composition bias toward basic and acidic residues. Over residues 415–426 (PATSNKNNTEQL) the composition is skewed to polar residues.

It belongs to the WD repeat KATNB1 family. In terms of assembly, interacts with katna1. This interaction enhances the microtubule binding and severing activity of katna1 and also targets this activity to the centrosome.

Its subcellular location is the cytoplasm. The protein localises to the cytoskeleton. The protein resides in the microtubule organizing center. It localises to the centrosome. It is found in the spindle pole. Its subcellular location is the spindle. Functionally, participates in a complex which severs microtubules in an ATP-dependent manner. May act to target the enzymatic subunit of this complex to sites of action such as the centrosome. Microtubule severing may promote rapid reorganization of cellular microtubule arrays and the release of microtubules from the centrosome following nucleation. This is Katanin p80 WD40 repeat-containing subunit B1 (katnb1) from Xenopus tropicalis (Western clawed frog).